We begin with the raw amino-acid sequence, 488 residues long: Aspartyl/glutamyl-tRNA(Asn/Gln) amidotransferase subunit B (488 aa).

It belongs to the GatB/GatE family. GatB subfamily. In terms of assembly, heterotrimer of A, B and C subunits.

It carries out the reaction L-glutamyl-tRNA(Gln) + L-glutamine + ATP + H2O = L-glutaminyl-tRNA(Gln) + L-glutamate + ADP + phosphate + H(+). The enzyme catalyses L-aspartyl-tRNA(Asn) + L-glutamine + ATP + H2O = L-asparaginyl-tRNA(Asn) + L-glutamate + ADP + phosphate + 2 H(+). Its function is as follows. Allows the formation of correctly charged Asn-tRNA(Asn) or Gln-tRNA(Gln) through the transamidation of misacylated Asp-tRNA(Asn) or Glu-tRNA(Gln) in organisms which lack either or both of asparaginyl-tRNA or glutaminyl-tRNA synthetases. The reaction takes place in the presence of glutamine and ATP through an activated phospho-Asp-tRNA(Asn) or phospho-Glu-tRNA(Gln). This chain is Aspartyl/glutamyl-tRNA(Asn/Gln) amidotransferase subunit B, found in Chlamydia trachomatis serovar L2 (strain ATCC VR-902B / DSM 19102 / 434/Bu).